We begin with the raw amino-acid sequence, 429 residues long: Adenylosuccinate synthetase (429 aa).

Residues 13–19 (GDEGKGK) and 41–43 (GHT) each bind GTP. Catalysis depends on D14, which acts as the Proton acceptor. D14 and G41 together coordinate Mg(2+). IMP contacts are provided by residues 14–17 (DEGK), 39–42 (NAGH), T130, R144, Q224, T239, and R303. H42 (proton donor) is an active-site residue. 299-305 (ATTGRAR) contacts substrate. Residues R305, 331–333 (KLD), and 412–414 (STG) contribute to the GTP site.

The protein belongs to the adenylosuccinate synthetase family. In terms of assembly, homodimer. Requires Mg(2+) as cofactor.

The protein localises to the cytoplasm. It carries out the reaction IMP + L-aspartate + GTP = N(6)-(1,2-dicarboxyethyl)-AMP + GDP + phosphate + 2 H(+). Its pathway is purine metabolism; AMP biosynthesis via de novo pathway; AMP from IMP: step 1/2. Functionally, plays an important role in the de novo pathway of purine nucleotide biosynthesis. Catalyzes the first committed step in the biosynthesis of AMP from IMP. The chain is Adenylosuccinate synthetase from Psychrobacter arcticus (strain DSM 17307 / VKM B-2377 / 273-4).